A 143-amino-acid polypeptide reads, in one-letter code: uncharacterized protein (143 aa).

Positions Met-1 to Ala-24 are cleaved as a signal peptide.

This is an uncharacterized protein from Bacillus subtilis (strain 168).